Reading from the N-terminus, the 961-residue chain is Valine--tRNA ligase (961 aa).

The 'HIGH' region motif lies at 48 to 58; sequence PNVTGSLHMGH. The short motif at 560–564 is the 'KMSKS' region element; it reads KMSKS. Lysine 563 contacts ATP. A coiled-coil region spans residues 892-961; the sequence is FINKDTELAR…QAQFKAIEAL (70 aa).

This sequence belongs to the class-I aminoacyl-tRNA synthetase family. ValS type 1 subfamily. Monomer.

The protein resides in the cytoplasm. The catalysed reaction is tRNA(Val) + L-valine + ATP = L-valyl-tRNA(Val) + AMP + diphosphate. Its function is as follows. Catalyzes the attachment of valine to tRNA(Val). As ValRS can inadvertently accommodate and process structurally similar amino acids such as threonine, to avoid such errors, it has a 'posttransfer' editing activity that hydrolyzes mischarged Thr-tRNA(Val) in a tRNA-dependent manner. This Haemophilus ducreyi (strain 35000HP / ATCC 700724) protein is Valine--tRNA ligase.